Here is a 197-residue protein sequence, read N- to C-terminus: Endonuclease V (197 aa).

D37 and E101 together coordinate Mg(2+).

This sequence belongs to the endonuclease V family. The cofactor is Mg(2+).

The protein localises to the cytoplasm. The catalysed reaction is Endonucleolytic cleavage at apurinic or apyrimidinic sites to products with a 5'-phosphate.. Functionally, DNA repair enzyme involved in the repair of deaminated bases. Selectively cleaves double-stranded DNA at the second phosphodiester bond 3' to a deoxyinosine leaving behind the intact lesion on the nicked DNA. This Thermococcus kodakarensis (strain ATCC BAA-918 / JCM 12380 / KOD1) (Pyrococcus kodakaraensis (strain KOD1)) protein is Endonuclease V.